The following is a 328-amino-acid chain: Telomere-binding protein cav (328 aa).

Residues 107 to 320 (RRKMVQPYPE…NISLQNSGSE (214 aa)) are required for binding to Su(var)205. The interval 139–228 (DRWQKQKSQN…EFQTEHTDCP (90 aa)) is disordered. Composition is skewed to polar residues over residues 144–167 (QKSQNRSAPESSSALVGHASQQDS) and 180–189 (ANTNRYSVSQ). 2 consecutive short sequence motifs (su(var)205-binding Pro-containing repeat) follow at residues 228–232 (PETQM) and 281–287 (PETETNE). A compositionally biased stretch (polar residues) spans 295–319 (INSESMSIGPSIDSEGNISLQNSGS). The segment at 295 to 328 (INSESMSIGPSIDSEGNISLQNSGSEPIDVDSMA) is disordered.

As to quaternary structure, interacts (via C-terminus) with Su(var)205 dimer (via hinge and chromoshadow domain) and with moi to form the terminin, telomere-capping, complex. Interacts with HP6, which is also part of the terminin complex.

The protein localises to the nucleus. It is found in the chromosome. Its subcellular location is the telomere. Functionally, binds to chromosome ends in a sequence-dependent manner and is required for telomere capping. In Drosophila erecta (Fruit fly), this protein is Telomere-binding protein cav.